The following is a 265-amino-acid chain: Dehydrogenase RED2 (265 aa).

The chain crosses the membrane as a helical span at residues 6–26; it reads SFLLSKLFLCIALCTAYVAFS. The N-linked (GlcNAc...) asparagine glycan is linked to Asn-45. A helical transmembrane segment spans residues 47–67; that stretch reads TSTVFGLTIVAIGLSALSSWL. The N-linked (GlcNAc...) asparagine glycan is linked to Asn-74. Val-89 contributes to the NADP(+) binding site. The N-linked (GlcNAc...) asparagine glycan is linked to Asn-127. Residues Asp-136 and Asn-163 each contribute to the NADP(+) site. Asn-176 is a glycosylation site (N-linked (GlcNAc...) asparagine). Ser-216 functions as the Proton donor in the catalytic mechanism. 2 residues coordinate NADP(+): Tyr-228 and Lys-232. Tyr-228 functions as the Proton acceptor in the catalytic mechanism. The Lowers pKa of active site Tyr role is filled by Lys-232.

It belongs to the short-chain dehydrogenases/reductases (SDR) family.

It is found in the membrane. The catalysed reaction is a primary alcohol + NAD(+) = an aldehyde + NADH + H(+). The enzyme catalyses a secondary alcohol + NAD(+) = a ketone + NADH + H(+). Its pathway is mycotoxin biosynthesis. Dehydrogenase; part of the Tox1B locus, one of the 2 loci that mediate the biosynthesis of T-toxin, a family of linear polyketides 37 to 45 carbons in length, of which the major component is 41 carbons, and which leads to high virulence to maize. One of the PKSs (PKS1 or PKS2) could synthesize a precursor, used subsequently by the other PKS as starter unit, to add additional carbons. Variability in the length of the final carbon backbone C35-47 could be achieved by varying the number of condensation cycles, or use of different starter or extender units or might be due to decarboxylation of the penultimate product, catalyzed by DEC1. Additional proteins are required for the biosynthesis of T-toxin, including oxidoreductases RED1, RED2, RED3, LAM1 and OXI1, as well as esterase TOX9. The chain is Dehydrogenase RED2 from Cochliobolus heterostrophus (strain C4 / ATCC 48331 / race T) (Southern corn leaf blight fungus).